The sequence spans 75 residues: uncharacterized protein (75 aa).

This is an uncharacterized protein from Enterobacteria phage T4 (Bacteriophage T4).